The primary structure comprises 423 residues: Enolase (423 aa).

A (2R)-2-phosphoglycerate-binding site is contributed by Gln-165. The Proton donor role is filled by Glu-209. Residues Asp-244, Glu-285, and Asp-310 each coordinate Mg(2+). Residues Lys-335, Arg-364, Ser-365, and Lys-386 each coordinate (2R)-2-phosphoglycerate. The active-site Proton acceptor is Lys-335.

The protein belongs to the enolase family. As to quaternary structure, homooctamer formed by a tetramer of dimers. The cofactor is Mg(2+).

It localises to the cytoplasm. Its subcellular location is the secreted. It is found in the cell surface. It carries out the reaction (2R)-2-phosphoglycerate = phosphoenolpyruvate + H2O. It participates in carbohydrate degradation; glycolysis; pyruvate from D-glyceraldehyde 3-phosphate: step 4/5. Its activity is regulated as follows. The covalent binding to the substrate causes inactivation of the enzyme, and possibly serves as a signal for the export of the protein. Its function is as follows. Catalyzes the reversible conversion of 2-phosphoglycerate (2-PG) into phosphoenolpyruvate (PEP). It is essential for the degradation of carbohydrates via glycolysis. This Methanocaldococcus jannaschii (strain ATCC 43067 / DSM 2661 / JAL-1 / JCM 10045 / NBRC 100440) (Methanococcus jannaschii) protein is Enolase.